Consider the following 254-residue polypeptide: Pimeloyl-[acyl-carrier protein] methyl ester esterase (254 aa).

Residues W20, 80–81 (SL), and 141–145 (FLALQ) each bind substrate. The active-site Nucleophile is S80. Residues D205 and H233 contribute to the active site. A substrate-binding site is contributed by H233.

It belongs to the AB hydrolase superfamily. Carboxylesterase BioH family. In terms of assembly, monomer.

It localises to the cytoplasm. It catalyses the reaction 6-carboxyhexanoyl-[ACP] methyl ester + H2O = 6-carboxyhexanoyl-[ACP] + methanol + H(+). It participates in cofactor biosynthesis; biotin biosynthesis. Functionally, the physiological role of BioH is to remove the methyl group introduced by BioC when the pimeloyl moiety is complete. It allows to synthesize pimeloyl-ACP via the fatty acid synthetic pathway through the hydrolysis of the ester bonds of pimeloyl-ACP esters. The chain is Pimeloyl-[acyl-carrier protein] methyl ester esterase from Methylococcus capsulatus (strain ATCC 33009 / NCIMB 11132 / Bath).